The sequence spans 177 residues: Thymidine kinase (177 aa).

Gly11–Ser18 provides a ligand contact to ATP. Glu83 functions as the Proton acceptor in the catalytic mechanism. Phe113 is a substrate binding site. The Zn(2+) site is built by Cys138 and Cys141. Ile157–Gly161 contacts substrate. Residues Cys170 and Cys173 each contribute to the Zn(2+) site.

It belongs to the thymidine kinase family. In terms of assembly, homotetramer. Two molecules of substrate bind to each enzyme tetramer.

It carries out the reaction thymidine + ATP = dTMP + ADP + H(+). Functionally, phosphorylates thymidine and thymidine analogs, such as azidothymidine (AZT). Part of the salvage pathway for pyrimidine deoxyribonucleotide synthesis. The polypeptide is Thymidine kinase (OPG101) (Homo sapiens (Human)).